The primary structure comprises 130 residues: Glycine cleavage system H protein (130 aa).

One can recognise a Lipoyl-binding domain in the interval 24 to 106 (TVTIGITDHA…YDDGWFFKVK (83 aa)). Lys-65 bears the N6-lipoyllysine mark.

Belongs to the GcvH family. The glycine cleavage system is composed of four proteins: P, T, L and H. The cofactor is (R)-lipoate.

Its function is as follows. The glycine cleavage system catalyzes the degradation of glycine. The H protein shuttles the methylamine group of glycine from the P protein to the T protein. The protein is Glycine cleavage system H protein of Saccharophagus degradans (strain 2-40 / ATCC 43961 / DSM 17024).